The primary structure comprises 170 residues: Inosine/xanthosine triphosphatase (170 aa).

The protein belongs to the YjjX NTPase family. In terms of assembly, homodimer. Requires Mg(2+) as cofactor. It depends on Mn(2+) as a cofactor.

It carries out the reaction XTP + H2O = XDP + phosphate + H(+). It catalyses the reaction ITP + H2O = IDP + phosphate + H(+). In terms of biological role, phosphatase that hydrolyzes non-canonical purine nucleotides such as XTP and ITP to their respective diphosphate derivatives. Probably excludes non-canonical purines from DNA/RNA precursor pool, thus preventing their incorporation into DNA/RNA and avoiding chromosomal lesions. The sequence is that of Inosine/xanthosine triphosphatase from Aliivibrio fischeri (strain ATCC 700601 / ES114) (Vibrio fischeri).